We begin with the raw amino-acid sequence, 140 residues long: MRIIGLDVGTKTVGVALSDPLGITAQPFETITRKENNKLRRTYARIEQIISEYDVTEIVVGYPKNMDDTIGERAKACEEFAAALERRTGLPVTLWDERLTTVEADEVLEECGMRRENRKTVIDQLAAVFILRGYMESKQK.

Belongs to the YqgF nuclease family.

Its subcellular location is the cytoplasm. Its function is as follows. Could be a nuclease involved in processing of the 5'-end of pre-16S rRNA. The polypeptide is Putative pre-16S rRNA nuclease (Lachnospira eligens (strain ATCC 27750 / DSM 3376 / VPI C15-48 / C15-B4) (Eubacterium eligens)).